We begin with the raw amino-acid sequence, 317 residues long: uncharacterized protein (317 aa).

A run of 7 helical transmembrane segments spans residues 18 to 38 (FWLI…LVII), 58 to 78 (IILS…GFIF), 92 to 112 (FLGS…WWSF), 130 to 150 (LFSA…AWAV), 159 to 179 (LFHI…KLLP), 202 to 222 (CSFL…LSTV), and 252 to 272 (NLLN…LLIA).

This sequence belongs to the CbiQ family.

It is found in the cell membrane. This is an uncharacterized protein from Mycoplasma genitalium (strain ATCC 33530 / DSM 19775 / NCTC 10195 / G37) (Mycoplasmoides genitalium).